Consider the following 89-residue polypeptide: Small ribosomal subunit protein uS15 (89 aa).

Belongs to the universal ribosomal protein uS15 family. In terms of assembly, part of the 30S ribosomal subunit. Forms a bridge to the 50S subunit in the 70S ribosome, contacting the 23S rRNA.

In terms of biological role, one of the primary rRNA binding proteins, it binds directly to 16S rRNA where it helps nucleate assembly of the platform of the 30S subunit by binding and bridging several RNA helices of the 16S rRNA. Functionally, forms an intersubunit bridge (bridge B4) with the 23S rRNA of the 50S subunit in the ribosome. The chain is Small ribosomal subunit protein uS15 from Leuconostoc citreum (strain KM20).